A 295-amino-acid polypeptide reads, in one-letter code: Bifunctional protein FolD (295 aa).

Residues 166–168, Ser-195, and Ile-236 contribute to the NADP(+) site; that span reads GRS.

It belongs to the tetrahydrofolate dehydrogenase/cyclohydrolase family. Homodimer.

The catalysed reaction is (6R)-5,10-methylene-5,6,7,8-tetrahydrofolate + NADP(+) = (6R)-5,10-methenyltetrahydrofolate + NADPH. The enzyme catalyses (6R)-5,10-methenyltetrahydrofolate + H2O = (6R)-10-formyltetrahydrofolate + H(+). The protein operates within one-carbon metabolism; tetrahydrofolate interconversion. Catalyzes the oxidation of 5,10-methylenetetrahydrofolate to 5,10-methenyltetrahydrofolate and then the hydrolysis of 5,10-methenyltetrahydrofolate to 10-formyltetrahydrofolate. This Chlorobium phaeovibrioides (strain DSM 265 / 1930) (Prosthecochloris vibrioformis (strain DSM 265)) protein is Bifunctional protein FolD.